Consider the following 169-residue polypeptide: Peptide methionine sulfoxide reductase MsrA (169 aa).

Cys10 is a catalytic residue.

The protein belongs to the MsrA Met sulfoxide reductase family.

It catalyses the reaction L-methionyl-[protein] + [thioredoxin]-disulfide + H2O = L-methionyl-(S)-S-oxide-[protein] + [thioredoxin]-dithiol. The catalysed reaction is [thioredoxin]-disulfide + L-methionine + H2O = L-methionine (S)-S-oxide + [thioredoxin]-dithiol. In terms of biological role, has an important function as a repair enzyme for proteins that have been inactivated by oxidation. Catalyzes the reversible oxidation-reduction of methionine sulfoxide in proteins to methionine. The protein is Peptide methionine sulfoxide reductase MsrA of Streptococcus agalactiae serotype Ia (strain ATCC 27591 / A909 / CDC SS700).